We begin with the raw amino-acid sequence, 776 residues long: Outer capsid protein VP4 (776 aa).

The interval 65-224 is spike head; it reads LDGPYQPTTF…KCTEYINTGL (160 aa). Intrachain disulfides connect C203-C216 and C318-C380. Residues 248-479 are spike body and stalk (antigen domain); the sequence is AQVNEDILIS…LISLVPSNDD (232 aa). The interval 389-409 is hydrophobic; possible role in virus entry into host cell; it reads LPVGHYPVMTGGAVTLHSAGV. A YGL motif; interaction with ITGA4 motif is present at residues 448–450; it reads YGL. Positions 484–511 form a coiled coil; that stretch reads IMNSVTVRQDLERQLSELRDEFNSLSQQ. The spike foot stretch occupies residues 510-776; that stretch reads QQIAMSQLID…IENLIMQCRL (267 aa). Residues 644-646 carry the KID motif; interaction with HSPA8 motif; the sequence is KID.

The protein belongs to the rotavirus VP4 family. In terms of assembly, homotrimer. VP4 adopts a dimeric appearance above the capsid surface, while forming a trimeric base anchored inside the capsid layer. Only hints of the third molecule are observed above the capsid surface. It probably performs a series of molecular rearrangements during viral entry. Prior to trypsin cleavage, it is flexible. The priming trypsin cleavage triggers its rearrangement into rigid spikes with approximate two-fold symmetry of their protruding parts. After an unknown second triggering event, cleaved VP4 may undergo another rearrangement, in which two VP5* subunits fold back on themselves and join a third subunit to form a tightly associated trimer, shaped like a folded umbrella. Interacts with VP6. Interacts with VP7. Homotrimer. The trimer is coiled-coil stabilized by its C-terminus, however, its N-terminus, known as antigen domain or 'body', seems to be flexible allowing it to self-associate either as a dimer or a trimer. In terms of processing, proteolytic cleavage by trypsin results in activation of VP4 functions and greatly increases infectivity. The penetration into the host cell is dependent on trypsin treatment of VP4. It produces two peptides, VP5* and VP8* that remain associated with the virion. Cleavage of VP4 by trypsin probably occurs in vivo in the lumen of the intestine prior to infection of enterocytes. Trypsin seems to be incorporated into the three-layered viral particles but remains inactive as long as the viral outer capsid is intact and would only be activated upon the solubilization of the latter.

It localises to the virion. It is found in the host rough endoplasmic reticulum. Its subcellular location is the host cell membrane. The protein resides in the host cytoplasm. The protein localises to the host cytoskeleton. It localises to the host endoplasmic reticulum-Golgi intermediate compartment. Spike-forming protein that mediates virion attachment to the host epithelial cell receptors and plays a major role in cell penetration, determination of host range restriction and virulence. Rotavirus attachment and entry into the host cell probably involves multiple sequential contacts between the outer capsid proteins VP4 and VP7, and the cell receptors. It is subsequently lost, together with VP7, following virus entry into the host cell. Following entry into the host cell, low intracellular or intravesicular Ca(2+) concentration probably causes the calcium-stabilized VP7 trimers to dissociate from the virion. This step is probably necessary for the membrane-disrupting entry step and the release of VP4, which is locked onto the virion by VP7. During the virus exit from the host cell, VP4 seems to be required to target the newly formed virions to the host cell lipid rafts. Its function is as follows. Forms the spike 'foot' and 'body' and acts as a membrane permeabilization protein that mediates release of viral particles from endosomal compartments into the cytoplasm. During entry, the part of VP5* that protrudes from the virus folds back on itself and reorganizes from a local dimer to a trimer. This reorganization may be linked to membrane penetration by exposing VP5* hydrophobic region. In integrin-dependent strains, VP5* targets the integrin heterodimer ITGA2/ITGB1 for cell attachment. Functionally, forms the head of the spikes and mediates the recognition of specific host cell surface glycans. It is the viral hemagglutinin and an important target of neutralizing antibodies. In sialic acid-dependent strains, VP8* binds to host cell sialic acid, most probably a ganglioside, providing the initial contact. In some other strains, VP8* mediates the attachment to histo-blood group antigens (HBGAs) for viral entry. This chain is Outer capsid protein VP4, found in Rotavirus A (isolate RVA/Equine/United Kingdom/L338/1988/G13P12[18]) (RV-A).